Here is a 373-residue protein sequence, read N- to C-terminus: MFLNSLKLKDFRNYKSLQVDFSNSINVLIGDNAQGKTNLLEAIYILSMARSHRDNNDRDLINWSSDFSDITGEVQSKMGKFPLEVRITRTGKKVFVNHLTENRLSDYIGNLHTVLFAPEDLDLVKGSPGVRRKFIDSEFGQMSANYLFNLLQYRSVLKNRNAYLKNIKWIGNNPKIDEDYLKVLNDQLIDFGSEIIFQRFVLVKELEKYSYQIHKAISRNEKLTIKYASFSGIDDQSTKEEISKIFNNQLLKNKTRELFLKSTSVGPHHDDLKFSINGKEVGSFASQGQQRTTALSVRLAEIEMMKYETGEYPILLLDDVLSELDGDRQTQLLNFIQDKVQTFLTTTSLSDVERDLIKDPKIYQVKGGTLVNG.

Residue 30 to 37 (GDNAQGKT) coordinates ATP.

This sequence belongs to the RecF family.

The protein localises to the cytoplasm. Functionally, the RecF protein is involved in DNA metabolism; it is required for DNA replication and normal SOS inducibility. RecF binds preferentially to single-stranded, linear DNA. It also seems to bind ATP. The protein is DNA replication and repair protein RecF of Oenococcus oeni (strain ATCC BAA-331 / PSU-1).